The chain runs to 873 residues: Tetratricopeptide repeat protein 16 (873 aa).

The tract at residues 1 to 20 is disordered; the sequence is MTDSDEDALKVDQGPSRDIP. 8 TPR repeats span residues 61-94, 96-128, 136-169, 251-284, 285-318, 331-364, 365-398, and 406-439; these read VREY…DPQL, DFYA…QQDN, TFVL…QPEK, AQQA…NPLD, PSLF…VTED, LLTY…EQQE, KGLY…SPQD, and GLLQ…NPQK. Disordered regions lie at residues 553 to 626 and 639 to 873; these read EELK…TSET and SATA…YEAV. Positions 571-582 are enriched in acidic residues; that stretch reads GEAEAPEEEEEK. Basic and acidic residues predominate over residues 583–593; sequence EKEKKEEKKSE. 3 stretches are compositionally biased toward polar residues: residues 600–626, 639–663, and 675–693; these read ASLS…TSET, SATA…NNRE, and TQGQ…SQRR. Residues 694–708 show a composition bias toward basic residues; that stretch reads NSSKTKATIHKRNSS. The span at 709-750 shows a compositional bias: polar residues; sequence KTKATQSQRRNSSKTRATQGQGQSSSKTEATQGQRQSSSEIE. The span at 763 to 784 shows a compositional bias: basic residues; it reads KTTRSPRQRPRKVKAARGRSWR. Composition is skewed to polar residues over residues 800-828 and 836-860; these read RSST…GQRS and GKSQ…SLSK.

This Homo sapiens (Human) protein is Tetratricopeptide repeat protein 16 (TTC16).